The primary structure comprises 523 residues: UDP-glucuronosyltransferase 3A2 (523 aa).

The signal sequence occupies residues Met-1–Ala-22. The Extracellular segment spans residues Ala-23–Asp-487. The N-linked (GlcNAc...) asparagine glycan is linked to Asn-52. The helical transmembrane segment at Val-488–Val-508 threads the bilayer. The Cytoplasmic segment spans residues Ala-509–Ala-523.

It belongs to the UDP-glycosyltransferase family. As to expression, highly expressed in kidney, while it is expressed at low levels in liver. Not detected in other tissues examined.

Its subcellular location is the membrane. The enzyme catalyses glucuronate acceptor + UDP-alpha-D-glucuronate = acceptor beta-D-glucuronoside + UDP + H(+). Its function is as follows. UDP-glucuronosyltransferases catalyze phase II biotransformation reactions in which lipophilic substrates are conjugated with glucuronic acid to increase water solubility and enhance excretion. They are of major importance in the conjugation and subsequent elimination of potentially toxic xenobiotics and endogenous compounds. In Mus musculus (Mouse), this protein is UDP-glucuronosyltransferase 3A2 (Ugt3a2).